Consider the following 274-residue polypeptide: Karrikin insensitive 2 receptor IA (274 aa).

The active-site Nucleophile is serine 95. Catalysis depends on residues aspartate 217 and histidine 246.

Belongs to the AB hydrolase superfamily. As to quaternary structure, interacts with MAX2A and MAX2B in the presence of (-)-germacrene D, thus forming an E3 SCF ubiquitin ligase complex (ASK-cullin-F-box) containing MAX2A or MAX2B and KAI2IA recognizing SMAX1A; this leads to the subsequent degradation of the transcriptional corepressor SMAX1A, thus triggering the activation of a downstream signaling cascade. Strongly expressed in stigma.

The protein localises to the nucleus. It is found in the cytoplasm. With respect to regulation, hydrolysis activity toward yoshimulactone green (YLG), a fluorescent agonist to strigolactone receptor, is inhibited by (-)-germacrene D and GR24, a synthetic strigolactone analog. Hydrolase involved in the olfaction of sesquiterpene volatile organic compounds (VOCs) during volatile plant communication in a MAX2 proteins-dependent manner. Acts as a karrikin-insensitive receptor that stereospecifically perceives and binds to (-)-germacrene D, particularly in stigmas, and triggers a signaling cascade influencing plant fitness, as the result of reproductive organ growth-promoting effect; this process involves an interaction with MAX2 proteins (e.g. MAX2A and MAX2B) and the subsequent degradation of SMAX1a, a transcriptional corepressor. The protein is Karrikin insensitive 2 receptor IA of Petunia hybrida (Petunia).